The following is a 259-amino-acid chain: Sugar fermentation stimulation protein homolog (259 aa).

Belongs to the SfsA family.

This chain is Sugar fermentation stimulation protein homolog, found in Prochlorococcus marinus (strain MIT 9303).